We begin with the raw amino-acid sequence, 104 residues long: Large ribosomal subunit protein bL21 (104 aa).

It belongs to the bacterial ribosomal protein bL21 family. In terms of assembly, part of the 50S ribosomal subunit. Contacts protein L20.

Its function is as follows. This protein binds to 23S rRNA in the presence of protein L20. The chain is Large ribosomal subunit protein bL21 from Symbiobacterium thermophilum (strain DSM 24528 / JCM 14929 / IAM 14863 / T).